Reading from the N-terminus, the 118-residue chain is Down syndrome critical region protein 4 (118 aa).

The disordered stretch occupies residues 1-39 (MSLIILTRDDEPRIFTPDSDAASPALHSTSPLPDPASAS). Low complexity predominate over residues 28-39 (STSPLPDPASAS).

In terms of tissue distribution, mainly expressed in placenta.

The chain is Down syndrome critical region protein 4 (DSCR4) from Homo sapiens (Human).